We begin with the raw amino-acid sequence, 123 residues long: Holo-[acyl-carrier-protein] synthase (123 aa).

The Mg(2+) site is built by Asp-8 and Glu-50.

It belongs to the P-Pant transferase superfamily. AcpS family. Mg(2+) serves as cofactor.

It is found in the cytoplasm. It carries out the reaction apo-[ACP] + CoA = holo-[ACP] + adenosine 3',5'-bisphosphate + H(+). Transfers the 4'-phosphopantetheine moiety from coenzyme A to a Ser of acyl-carrier-protein. The sequence is that of Holo-[acyl-carrier-protein] synthase from Kocuria rhizophila (strain ATCC 9341 / DSM 348 / NBRC 103217 / DC2201).